A 269-amino-acid chain; its full sequence is 4-hydroxy-tetrahydrodipicolinate reductase (269 aa).

Residues glycine 8 to methionine 13 and glutamate 34 contribute to the NAD(+) site. An NADP(+)-binding site is contributed by arginine 35. NAD(+)-binding positions include glycine 98 to threonine 100 and alanine 122 to tyrosine 125. Histidine 155 (proton donor/acceptor) is an active-site residue. Histidine 156 contacts (S)-2,3,4,5-tetrahydrodipicolinate. The active-site Proton donor is lysine 159. Glycine 165–threonine 166 is a binding site for (S)-2,3,4,5-tetrahydrodipicolinate.

This sequence belongs to the DapB family.

The protein localises to the cytoplasm. The enzyme catalyses (S)-2,3,4,5-tetrahydrodipicolinate + NAD(+) + H2O = (2S,4S)-4-hydroxy-2,3,4,5-tetrahydrodipicolinate + NADH + H(+). It carries out the reaction (S)-2,3,4,5-tetrahydrodipicolinate + NADP(+) + H2O = (2S,4S)-4-hydroxy-2,3,4,5-tetrahydrodipicolinate + NADPH + H(+). Its pathway is amino-acid biosynthesis; L-lysine biosynthesis via DAP pathway; (S)-tetrahydrodipicolinate from L-aspartate: step 4/4. In terms of biological role, catalyzes the conversion of 4-hydroxy-tetrahydrodipicolinate (HTPA) to tetrahydrodipicolinate. In Vibrio parahaemolyticus serotype O3:K6 (strain RIMD 2210633), this protein is 4-hydroxy-tetrahydrodipicolinate reductase.